Consider the following 203-residue polypeptide: HTH-type transcriptional regulator CymR (203 aa).

One can recognise an HTH tetR-type domain in the interval 13 to 73 (METQGKLIAA…ATFEWLYEQI (61 aa)). The segment at residues 36-55 (RIADVPGAAGVSRGAQSHHF) is a DNA-binding region (H-T-H motif).

Functionally, involved in the repression of the cym and cmt operons which are responsible of the p-cymene degradation. This Pseudomonas putida (Arthrobacter siderocapsulatus) protein is HTH-type transcriptional regulator CymR.